The chain runs to 358 residues: Protein SRG1 (358 aa).

A Fe2OG dioxygenase domain is found at 209-309 (SVQSMRMNYY…RLSIATFHNV (101 aa)). Histidine 233, aspartate 235, and histidine 290 together coordinate Fe cation.

This sequence belongs to the iron/ascorbate-dependent oxidoreductase family. In terms of tissue distribution, low expression in roots and leaves.

The sequence is that of Protein SRG1 (SRG1) from Arabidopsis thaliana (Mouse-ear cress).